The following is a 359-amino-acid chain: MKTLTVHTPSHSYPIFIGNGLLPQAGSLLKPHLGKRAAIIANETVAPLYLGTLQTALDAAGVSHFSIILPDGEAHKNWQTLNLIFDGLMQNRAERKTTLIALGGGVIGDMVGFAAATYQRGAPFVQIPTTLLSQVDSSVGGKTAINHPLGKNMIGAFYQPQAVLADLDTLHTLPARELSAGMAEVIKYGALGDIGFFEWLEQHMPELMTLDREKLAQAVYRCCQMKADIVAQDETEQGIRAWLNLGHTFGHAIETEMGYGTWLHGEAIAAGCVLAARLSEQLGKTSAADTARLAALLEAAGLPSAPPVFAFEKWLEHMSHDKKVSGGIMRFIGLNRLGEANITEITDTDILRRTLQPYL.

Residues 71–76, 105–109, 129–130, K142, K151, and 169–172 contribute to the NAD(+) site; these read DGEAHK, GVIGD, TT, and TLHT. Zn(2+) is bound by residues E184, H247, and H264.

The protein belongs to the sugar phosphate cyclases superfamily. Dehydroquinate synthase family. It depends on NAD(+) as a cofactor. Co(2+) is required as a cofactor. Requires Zn(2+) as cofactor.

The protein resides in the cytoplasm. It catalyses the reaction 7-phospho-2-dehydro-3-deoxy-D-arabino-heptonate = 3-dehydroquinate + phosphate. It participates in metabolic intermediate biosynthesis; chorismate biosynthesis; chorismate from D-erythrose 4-phosphate and phosphoenolpyruvate: step 2/7. Functionally, catalyzes the conversion of 3-deoxy-D-arabino-heptulosonate 7-phosphate (DAHP) to dehydroquinate (DHQ). The protein is 3-dehydroquinate synthase of Neisseria meningitidis serogroup B (strain ATCC BAA-335 / MC58).